Here is an 898-residue protein sequence, read N- to C-terminus: Alanine--tRNA ligase (898 aa).

Zn(2+) contacts are provided by histidine 564, histidine 568, cysteine 682, and histidine 686.

Belongs to the class-II aminoacyl-tRNA synthetase family. The cofactor is Zn(2+).

It localises to the cytoplasm. The catalysed reaction is tRNA(Ala) + L-alanine + ATP = L-alanyl-tRNA(Ala) + AMP + diphosphate. In terms of biological role, catalyzes the attachment of alanine to tRNA(Ala) in a two-step reaction: alanine is first activated by ATP to form Ala-AMP and then transferred to the acceptor end of tRNA(Ala). Also edits incorrectly charged Ser-tRNA(Ala) and Gly-tRNA(Ala) via its editing domain. In Beijerinckia indica subsp. indica (strain ATCC 9039 / DSM 1715 / NCIMB 8712), this protein is Alanine--tRNA ligase.